Here is a 246-residue protein sequence, read N- to C-terminus: MNPLITDFQTPQQRTPVIVALDFANEKDTLGFVRNLDPALCQIKIGKELFTATGRSLAESLIHQGFKLFLDLKYHDIPHTVAQACKVAADMGVWMVDMHASGGRRMMEAAAEAVAGYGTKPLLIGVTVLTSMEQSDLAEIGLNTAPEEQVIRLAKLAQSSGLDGVVCSAQEAAPLRRELGRDFVLVTPGIRLDVAGNNDDQRRIMTPAEALAAGSTYLVMGRPVTRAADPVAVLREVNRVANLEAN.

Residues Asp-22, Lys-44, 71–80 (DLKYHDIPHT), Thr-130, Arg-191, Gln-201, Gly-221, and Arg-222 contribute to the substrate site. Residue Lys-73 is the Proton donor of the active site.

It belongs to the OMP decarboxylase family. Type 1 subfamily. As to quaternary structure, homodimer.

It carries out the reaction orotidine 5'-phosphate + H(+) = UMP + CO2. It functions in the pathway pyrimidine metabolism; UMP biosynthesis via de novo pathway; UMP from orotate: step 2/2. In terms of biological role, catalyzes the decarboxylation of orotidine 5'-monophosphate (OMP) to uridine 5'-monophosphate (UMP). The chain is Orotidine 5'-phosphate decarboxylase from Neisseria gonorrhoeae (strain ATCC 700825 / FA 1090).